An 81-amino-acid chain; its full sequence is Bursicon (81 aa).

In terms of assembly, heterodimer of burs and pburs. In terms of tissue distribution, central nervous system. Coexpressed with CCAP in most CCAP-specific neurons. Coexpressed with pburs in the large bilateral lateral neurosecretory neurons of the first three unfused abdominal ganglia and in all anterior bilateral cell pairs in the thoracic ganglia.

The protein resides in the secreted. In terms of biological role, final heterodimeric neurohormone released at the end of the molting cycle, involved in the sclerotization (tanning) of the insect cuticle, melanization and wing spreading. This chain is Bursicon (burs), found in Periplaneta americana (American cockroach).